The following is a 121-amino-acid chain: MENIPPKVQNQLAMLQQMQQQLQTVVSQKGQYELTIREARRAVEDLADVPEDAAVFMNVGSVMMQKSKEQVLASLNERIETLELRVKSLEKQEKALQGRFEQLSSQIRGALEGKQQPPGPA.

The protein belongs to the prefoldin subunit beta family. In terms of assembly, heterohexamer of two alpha and four beta subunits.

The protein localises to the cytoplasm. Functionally, molecular chaperone capable of stabilizing a range of proteins. Seems to fulfill an ATP-independent, HSP70-like function in archaeal de novo protein folding. The protein is Prefoldin subunit beta of Methanoculleus marisnigri (strain ATCC 35101 / DSM 1498 / JR1).